The sequence spans 480 residues: Sensor histidine kinase CusS (480 aa).

Over 1–15 (MVSKPFQRPFSLATR) the chain is Cytoplasmic. A helical transmembrane segment spans residues 16–36 (LTFFISLATIAAFFAFAWIMI). The Periplasmic segment spans residues 37–186 (HSVKVHFAEQ…LHYINDLMNK (150 aa)). A helical membrane pass occupies residues 187–207 (LIMTASVISILIVFIVLLAVH). An HAMP domain is found at 208–260 (KGHAPIRSVSRQIQNITSKDLDVRLDPQTVPIELEQLVLSFNHMIERIEDVFT). The Cytoplasmic portion of the chain corresponds to 208-480 (KGHAPIRSVS…GTRFVITLPA (273 aa)). A Histidine kinase domain is found at 268–480 (DIAHEIRTPI…GTRFVITLPA (213 aa)). Residue His271 is modified to Phosphohistidine; by autocatalysis.

Post-translationally, autophosphorylated.

The protein localises to the cell inner membrane. It catalyses the reaction ATP + protein L-histidine = ADP + protein N-phospho-L-histidine.. Functionally, member of the two-component regulatory system CusS/CusR involved in response to copper and silver. Acts as a copper/silver ion sensor. Activates CusR by phosphorylation. This is Sensor histidine kinase CusS (cusS) from Escherichia coli (strain K12).